A 285-amino-acid chain; its full sequence is ATP phosphoribosyltransferase (285 aa).

The protein belongs to the ATP phosphoribosyltransferase family. Long subfamily. The cofactor is Mg(2+).

The protein resides in the cytoplasm. It catalyses the reaction 1-(5-phospho-beta-D-ribosyl)-ATP + diphosphate = 5-phospho-alpha-D-ribose 1-diphosphate + ATP. The protein operates within amino-acid biosynthesis; L-histidine biosynthesis; L-histidine from 5-phospho-alpha-D-ribose 1-diphosphate: step 1/9. Feedback inhibited by histidine. Functionally, catalyzes the condensation of ATP and 5-phosphoribose 1-diphosphate to form N'-(5'-phosphoribosyl)-ATP (PR-ATP). Has a crucial role in the pathway because the rate of histidine biosynthesis seems to be controlled primarily by regulation of HisG enzymatic activity. The protein is ATP phosphoribosyltransferase of Streptomyces avermitilis (strain ATCC 31267 / DSM 46492 / JCM 5070 / NBRC 14893 / NCIMB 12804 / NRRL 8165 / MA-4680).